Reading from the N-terminus, the 282-residue chain is Prohibitin-1 (282 aa).

Residues 106–109 (YQNL) carry the AIM motif.

Belongs to the prohibitin family. As to quaternary structure, the mitochondrial prohibitin complex consists of two subunits (phb1 and phb2). The subunits assemble into a membrane-associated ring-shaped supercomplex of approximately 1 mDa.

Its subcellular location is the mitochondrion inner membrane. It is found in the cytoplasm. Prohibitin probably acts as a holdase/unfoldase for the stabilization of newly synthesized mitochondrial proteins. Involved in mitophagy; may act as an adapter for atg8 that supports mitophagosome assembly. Negatively regulates the proteolytic processing of atg32 via the i-AAA protease. Acts as a negative regulator of the m-AAA protease. The protein is Prohibitin-1 (phb1) of Schizosaccharomyces pombe (strain 972 / ATCC 24843) (Fission yeast).